An 84-amino-acid chain; its full sequence is Small ribosomal subunit protein uS17 (84 aa).

This sequence belongs to the universal ribosomal protein uS17 family. Part of the 30S ribosomal subunit.

One of the primary rRNA binding proteins, it binds specifically to the 5'-end of 16S ribosomal RNA. The chain is Small ribosomal subunit protein uS17 from Clostridium botulinum (strain Okra / Type B1).